The chain runs to 109 residues: Thiosulfate sulfurtransferase GlpE (109 aa).

One can recognise a Rhodanese domain in the interval 16 to 104 (REQGAVVVDV…WRTTFPSETA (89 aa)). The active-site Cysteine persulfide intermediate is the C64.

This sequence belongs to the GlpE family.

It localises to the cytoplasm. It catalyses the reaction thiosulfate + hydrogen cyanide = thiocyanate + sulfite + 2 H(+). The catalysed reaction is thiosulfate + [thioredoxin]-dithiol = [thioredoxin]-disulfide + hydrogen sulfide + sulfite + 2 H(+). In terms of biological role, transferase that catalyzes the transfer of sulfur from thiosulfate to thiophilic acceptors such as cyanide or dithiols. May function in a CysM-independent thiosulfate assimilation pathway by catalyzing the conversion of thiosulfate to sulfite, which can then be used for L-cysteine biosynthesis. The protein is Thiosulfate sulfurtransferase GlpE of Pseudomonas fluorescens (strain Pf0-1).